The chain runs to 886 residues: Microsomal triacylglycerol transfer protein (886 aa).

A signal peptide spans 1-27; that stretch reads MENKNKKCLRTLLLLALFLGLLEDGKT. A Vitellogenin domain is found at 30 to 653; that stretch reads IAPNSQQIFK…SQASSFKLGI (624 aa). N358, N484, N502, and N616 each carry an N-linked (GlcNAc...) asparagine glycan.

Its subcellular location is the endoplasmic reticulum. It is found in the golgi apparatus. The enzyme catalyses a 1,2-diacyl-sn-glycero-3-phosphocholine(in) = a 1,2-diacyl-sn-glycero-3-phosphocholine(out). The catalysed reaction is a 1,2-diacyl-sn-glycero-3-phosphoethanolamine(in) = a 1,2-diacyl-sn-glycero-3-phosphoethanolamine(out). Catalyzes the transport of phospholipids such as phosphatidylethanolamine (1,2-diacyl-sn-glycero-3-phosphoethanolamine) and phosphatidylcholine (1,2-diacyl-sn-glycero-3-phosphocholine) between membranes. Required for the assembly and secretion of plasma lipoproteins that contain apolipoprotein B. This is Microsomal triacylglycerol transfer protein from Drosophila melanogaster (Fruit fly).